We begin with the raw amino-acid sequence, 292 residues long: Homoserine kinase (292 aa).

Residue 84-94 (PLARGMGSSSA) participates in ATP binding.

It belongs to the GHMP kinase family. Homoserine kinase subfamily.

Its subcellular location is the cytoplasm. It catalyses the reaction L-homoserine + ATP = O-phospho-L-homoserine + ADP + H(+). The protein operates within amino-acid biosynthesis; L-threonine biosynthesis; L-threonine from L-aspartate: step 4/5. In terms of biological role, catalyzes the ATP-dependent phosphorylation of L-homoserine to L-homoserine phosphate. In Thermus thermophilus (strain ATCC 27634 / DSM 579 / HB8), this protein is Homoserine kinase.